We begin with the raw amino-acid sequence, 437 residues long: ATP-dependent protease ATPase subunit HslU (437 aa).

ATP-binding positions include Val-18, 60–65 (GCGKTE), Asp-250, Glu-315, and Arg-387.

Belongs to the ClpX chaperone family. HslU subfamily. A double ring-shaped homohexamer of HslV is capped on each side by a ring-shaped HslU homohexamer. The assembly of the HslU/HslV complex is dependent on binding of ATP.

It is found in the cytoplasm. Its function is as follows. ATPase subunit of a proteasome-like degradation complex; this subunit has chaperone activity. The binding of ATP and its subsequent hydrolysis by HslU are essential for unfolding of protein substrates subsequently hydrolyzed by HslV. HslU recognizes the N-terminal part of its protein substrates and unfolds these before they are guided to HslV for hydrolysis. The protein is ATP-dependent protease ATPase subunit HslU of Methylorubrum populi (strain ATCC BAA-705 / NCIMB 13946 / BJ001) (Methylobacterium populi).